A 412-amino-acid polypeptide reads, in one-letter code: Adipocyte plasma membrane-associated protein (412 aa).

Residues 1–32 (MTEADGLRQRRPLRPQVVTDDNRTPEAKGGSS) form a disordered region. Residues 1-39 (MTEADGLRQRRPLRPQVVTDDNRTPEAKGGSSFSGRVFR) lie on the Cytoplasmic side of the membrane. Position 19 is a phosphothreonine (Thr19). A helical membrane pass occupies residues 40–60 (ATFLMLAAFLTIPLLGALVLL). The Extracellular segment spans residues 61–412 (DSPIDPEPLS…RAPYLCRLRL (352 aa)). An N-linked (GlcNAc...) asparagine glycan is attached at Asn159.

The protein belongs to the strictosidine synthase family.

The protein localises to the membrane. Functionally, exhibits strong arylesterase activity with beta-naphthyl acetate and phenyl acetate. May play a role in adipocyte differentiation. The chain is Adipocyte plasma membrane-associated protein (APMAP) from Bos taurus (Bovine).